The chain runs to 186 residues: Peptidyl-tRNA hydrolase (186 aa).

TRNA is bound at residue Y14. H19 functions as the Proton acceptor in the catalytic mechanism. 3 residues coordinate tRNA: Y61, N63, and N107.

The protein belongs to the PTH family. In terms of assembly, monomer.

Its subcellular location is the cytoplasm. The catalysed reaction is an N-acyl-L-alpha-aminoacyl-tRNA + H2O = an N-acyl-L-amino acid + a tRNA + H(+). Functionally, hydrolyzes ribosome-free peptidyl-tRNAs (with 1 or more amino acids incorporated), which drop off the ribosome during protein synthesis, or as a result of ribosome stalling. In terms of biological role, catalyzes the release of premature peptidyl moieties from peptidyl-tRNA molecules trapped in stalled 50S ribosomal subunits, and thus maintains levels of free tRNAs and 50S ribosomes. The chain is Peptidyl-tRNA hydrolase from Helicobacter pylori (strain G27).